The sequence spans 301 residues: Heat shock factor protein HSF24 (301 aa).

A DNA-binding region spans residues 7–101; sequence PAPFLLKTYQ…LLTAIRRRKT (95 aa). Disordered stretches follow at residues 103–160 and 221–244; these read TSTP…DENE and GVKD…DEKG. Residues 107-142 show a composition bias toward low complexity; sequence AGGKSVAAGASASPDNSGDDIGSSSTSSPDSKNPGS. A compositionally biased stretch (acidic residues) spans 233 to 243; that stretch reads DNDDKEDDDEK.

This sequence belongs to the HSF family. Homotrimer. Post-translationally, exhibits temperature-dependent phosphorylation.

It is found in the nucleus. Its function is as follows. DNA-binding protein that specifically binds heat shock promoter elements (HSE) and activates transcription. The polypeptide is Heat shock factor protein HSF24 (HSF24) (Solanum peruvianum (Peruvian tomato)).